The primary structure comprises 861 residues: Leucine--tRNA ligase (861 aa).

Residues 42–52 (PYPSGKLHMGH) carry the 'HIGH' region motif. A 'KMSKS' region motif is present at residues 619–623 (KMSKS). Lys-622 serves as a coordination point for ATP.

It belongs to the class-I aminoacyl-tRNA synthetase family.

The protein localises to the cytoplasm. The catalysed reaction is tRNA(Leu) + L-leucine + ATP = L-leucyl-tRNA(Leu) + AMP + diphosphate. The chain is Leucine--tRNA ligase from Actinobacillus pleuropneumoniae serotype 5b (strain L20).